Here is a 240-residue protein sequence, read N- to C-terminus: Transmembrane protein 65 (240 aa).

The N-terminal 61 residues, 1–61 (MSRLLPLLRS…RRLGTHPKKE (61 aa)), are a transit peptide targeting the mitochondrion. Residues 62–110 (PMEALNTAQGARDFIYSLHSTERSCLLKELHRFESIAIAQEKLEAPPPT) are Cytoplasmic-facing. Residues 111-131 (PGQLRYVFIHNAIPFIGFGFL) form a helical membrane-spanning segment. Residues 132-142 (DNAIMIVAGTH) are Extracellular-facing. Residues 143 to 165 (IEMSIGIILGISTMAAAALGNLV) traverse the membrane as a helical segment. Residues 166 to 209 (SDLAGLGLAGYVEALASRLGLSIPDLTPKQVDMWQTRLSTHLGK) are Cytoplasmic-facing. A helical membrane pass occupies residues 210–230 (AVGVTIGCILGMFPLIFFGGG). Topologically, residues 231-240 (EEDEKLETKS) are extracellular.

As to quaternary structure, monomer. Homodimer. Interacts with GJA1. Interacts weakly with DSP. Interacts with SCN1B. Predominantly expressed the ventricular tissue (at protein level).

It is found in the cell membrane. The protein localises to the mitochondrion inner membrane. In terms of biological role, essential for maintaining proper cardiac intercalated disk (ICD) structure and function as well as cardiac conduction velocity in the heart. Its association with SCN1B is required for stabilizing the perinexus in the ICD and for localization of GJA1 and SCN5A to the ICD. May regulate the function of the gap junction protein GJA1 and may contribute to the stability and proper localization of GJA1 to cardiac intercalated disk thereby regulating gap junction communication. May also play a role in the regulation of mitochondrial respiration and mitochondrial DNA copy number maintenance. This Homo sapiens (Human) protein is Transmembrane protein 65 (TMEM65).